The following is a 2470-amino-acid chain: Serine/threonine-protein kinase mTor (2470 aa).

8 HEAT repeats span residues 172–209 (QHIL…VTAQ), 746–785 (SYMN…VNGG), 791–829 (LWAD…ATGR), 835–873 (HKYP…MDPY), 962–999 (PYLA…FVKL), 1043–1080 (DYLA…FGST), 1083–1122 (YYLP…QLDF), and 1124–1160 (DFSS…QLGK). The 555-residue stretch at 1349-1903 (LLGTRAMACR…VYPLTVASKS (555 aa)) folds into the FAT domain. TPR repeat units lie at residues 1407 to 1440 (ANEL…DSSD) and 1718 to 1751 (MATW…DPNW). One copy of the HEAT 9 repeat lies at 1854–1891 (NTWLQVIPQLIARIDTHRQLVGQLIHQLLMDIGKNHPQ). The 313-residue stretch at 2077–2389 (IKTNLQVITS…SLSNSVEDSL (313 aa)) folds into the PI3K/PI4K catalytic domain. The G-loop stretch occupies residues 2083–2089 (VITSKQR). A catalytic loop region spans residues 2256–2264 (GLGDRHPSN). The interval 2276–2301 (HIDFGDCFEVAMTREKFPEKIPFRLT) is activation loop. Positions 2364-2389 (AGAGAPGGRGGSGMQDSLSNSVEDSL) are disordered. Gly residues predominate over residues 2367–2376 (GAPGGRGGSG). A compositionally biased stretch (polar residues) spans 2377–2386 (MQDSLSNSVE). The 33-residue stretch at 2438 to 2470 (KSVNEQSQVELLIQQATNNENLCQCYIGWCPFW) folds into the FATC domain.

Belongs to the PI3/PI4-kinase family. In terms of assembly, may be part of a minimal complex, TORC1, consisting of mTor, raptor and lst8. May be part of a minimal complex, TORC2, consisting of mTor, rictor and lst8. Self-associates; assembles into homomultimeric complexes. Component of a multiprotein complex.

It carries out the reaction L-seryl-[protein] + ATP = O-phospho-L-seryl-[protein] + ADP + H(+). The catalysed reaction is L-threonyl-[protein] + ATP = O-phospho-L-threonyl-[protein] + ADP + H(+). Promotes cell and tissue growth, maintains tissue homeostatis and controls responses to environmental stress and aging. Regulates growth during animal development by coupling growth factor signaling to nutrient availability. Central regulators of autophagy. May be involved in atg1 phosphorylation. May also be involved, directly or indirectly, in the control of neuronal function. Phosphorylates S6K/p70S6K, in vitro. May regulate the activity of S6K. Overexpression inhibits growth and reduces cell size. Affects the timing of neuronal cell differentiation. Hyperactivation of the signaling leads to accelerated differentiation, whereas inhibition of the signaling retards differentiation. Thus, in addition to controlling growth of the cell in which it resides, it can also influence growth of distant cells and organs during development via a humoral mechanism. As part of the TORC1 complex regulates energy homeostasis and promotes certain aspects of larval growth by negatively regulating REPTOR. REPTOR functions downstream of TORC1 to regulate the expression of stress response genes in response to TORC1 inhibition resulting from nutrient deprivation. When TORC1 activity is high it phosphorylates REPTOR which inhibits its recruitment into the nucleus and antagonizes their function. This function is essential under normal feeding conditions to promote TORC1-dependent growth during larval development and, in adults and larvae to prevent the REPTOR-dependent expression of nutrient stress response genes. In short, during development, it primarily controls growth, whereas in the adult, where there is relatively little growth, it controls aging and other aspects of nutrient-related physiology. Rag GTPases act as activators of TORC1 in response to amino acid signals. This Drosophila melanogaster (Fruit fly) protein is Serine/threonine-protein kinase mTor.